A 312-amino-acid chain; its full sequence is DNA-directed RNA polymerase subunit alpha (312 aa).

Residues 1-226 (MIEFEKPIIT…EHLNLFTDLT (226 aa)) are alpha N-terminal domain (alpha-NTD). The alpha C-terminal domain (alpha-CTD) stretch occupies residues 243-312 (DEKVLDRTIE…DLGLGLKNDK (70 aa)).

Belongs to the RNA polymerase alpha chain family. Homodimer. The RNAP catalytic core consists of 2 alpha, 1 beta, 1 beta' and 1 omega subunit. When a sigma factor is associated with the core the holoenzyme is formed, which can initiate transcription.

The catalysed reaction is RNA(n) + a ribonucleoside 5'-triphosphate = RNA(n+1) + diphosphate. In terms of biological role, DNA-dependent RNA polymerase catalyzes the transcription of DNA into RNA using the four ribonucleoside triphosphates as substrates. This Streptococcus pyogenes serotype M3 (strain ATCC BAA-595 / MGAS315) protein is DNA-directed RNA polymerase subunit alpha.